The following is a 708-amino-acid chain: F-box only protein 43 (708 aa).

The disordered stretch occupies residues 35–55 (MSQRHSGQAGTEAGNGADSPP). The residue at position 76 (Ser-76) is a Phosphoserine. Thr-234 carries the post-translational modification Phosphothreonine. The segment at 320–426 (PSPEVRGSIS…ISEGQLSSDE (107 aa)) is disordered. A compositionally biased stretch (polar residues) spans 327-337 (SISTPEDSGFN). Ser-334 carries the phosphoserine modification. Residues 374-385 (KTRHLGRSRRLS) are compositionally biased toward basic residues. The span at 399–411 (EKQIVHPDSEKRA) shows a compositional bias: basic and acidic residues. In terms of domain architecture, F-box spans 490 to 547 (MGIEKLDILTELKYRNLKHILAMVLESLTAESLCSVWKVSRNWREIVVQDKNANRRRK). The segment at 636-684 (ALKPCPRCQSPAKYQPYKKRGLCSRTACGFDFCVLCLCAYHGSEECSRG) adopts a ZBR-type zinc-finger fold. Cys-640, Cys-643, Cys-658, Cys-663, Cys-668, Cys-671, His-676, and Cys-681 together coordinate Zn(2+). The tract at residues 682–708 (SRGAAKPRNRKDALPGSAQSKRNLKRL) is disordered.

Part of a SCF (SKP1-cullin-F-box) protein ligase complex. According to PubMed:34595750 interaction with SKP1 does not occur. Interacts with ANAPC2; the interaction is direct, ANAPC4, CDC16, CDC23; the interaction is direct, ANAPC10; the interaction is direct and CDC26, during spermatogenesis. May interact with CDC20. In terms of processing, phosphorylated on Ser-76, Thr-234 and Ser-334 in response to calcium, which is a prerequisite for ubiquitination and proteasomal degradation. Ubiquitinated in response to calcium, which promotes proteasomal degradation. As to expression, expressed in the testis.

Its pathway is protein modification; protein ubiquitination. Its function is as follows. Required to establish and maintain the arrest of oocytes at the second meiotic metaphase until fertilization. Acts by inhibiting the anaphase-promoting complex/cyclosome (APC/C) ubiquitin ligase. Probably recognizes and binds to some phosphorylated proteins and promotes their ubiquitination and degradation. Plays a vital role in modulating the ubiquitilation of CCNB1 and CDK1 during gametogenesis. In Homo sapiens (Human), this protein is F-box only protein 43 (FBXO43).